A 440-amino-acid polypeptide reads, in one-letter code: Ferreportin (440 aa).

The Cytoplasmic portion of the chain corresponds to 1–8 (MKVQSLLR). The chain crosses the membrane as a helical span at residues 9 to 38 (IETQLLLGRLLTRSGDQAWDFVVPFALLVI). Ca(2+) is bound at residue D24. Residues 39–42 (FPGK) lie on the Extracellular side of the membrane. The chain crosses the membrane as a helical span at residues 43–69 (LQVAAFYYLIVKIGTFLLTPSSGKWID). Topologically, residues 70–72 (THP) are cytoplasmic. Residues 73–103 (RIQVVKWGVWLQFFAILAGMVFFGMLDGLVR) traverse the membrane as a helical segment. Residue Q84 participates in Ca(2+) binding. At 104-109 (AGGRES) the chain is on the extracellular side. A helical membrane pass occupies residues 110–145 (WLLSVLFIALALSGVMASLGSQITDISVGNDLAPSL). At 146–147 (VA) the chain is on the cytoplasmic side. A helical transmembrane segment spans residues 148 to 176 (PEKLTHFNSWLRRIDLATEVGAPILAGAL). The Extracellular segment spans residues 177–186 (FAFHPEQLPL). The helical transmembrane segment at 187–213 (AGLFLIGLWNLVSFVPEYFLLRNVIQR) threads the bilayer. Positions 196 and 203 each coordinate Ca(2+). At 214 to 242 (SGLKIKVLTEAQSWKDTFHINLRGSFSDP) the chain is on the cytoplasmic side. A helical transmembrane segment spans residues 243–271 (IFWLILSYALLWLSVLSPHGVLLAAYLKD). At 272–276 (EMRLP) the chain is on the extracellular side. The helical transmembrane segment at 277-304 (ETEIGLFRGLGAVFGLISTVSFPYLVRR) threads the bilayer. Over 305-306 (LG) the chain is Cytoplasmic. The chain crosses the membrane as a helical span at residues 307–329 (LISSSRWHLGFQGVTLGIAVTAF). Topologically, residues 330–335 (AMGSTA) are extracellular. The chain crosses the membrane as a helical span at residues 336-365 (SVYVFLGCILLSRVGLYGFSNGEFELRQRL). The Cytoplasmic portion of the chain corresponds to 366–370 (IPEGR). A helical transmembrane segment spans residues 371–395 (RGELNSLSSLTTTSATLILFSAGSL). Over 396–398 (LPQ) the chain is Extracellular. Residues 399–424 (TEDFKYLVYVSLAAVLLANVVFIKWS) form a helical membrane-spanning segment. Over 425–440 (SRQGVVTSGAAEPVES) the chain is Cytoplasmic.

The protein belongs to the ferroportin (FP) (TC 2.A.100) family. It depends on Ca(2+) as a cofactor.

It is found in the cell membrane. Functionally, iron transpoter that exports Fe(2+) from the cell. Also binds to Co(2+) and Ni(2+). May act as a multivalent divalent metal transporter. The transporter is composed of 12 transmembrane (TM) helices organized into N-terminal (TM1-6) and C-terminal (TM7-12) domains. The substrate-binding site is formed at the interface of the two domains and is alternately accessible from either side of the membrane. The transport cycle is viewed as a series of ligand-induced conformational changes that include open outward and open inward states. The chain is Ferreportin (slc39) from Bdellovibrio bacteriovorus (strain ATCC 15356 / DSM 50701 / NCIMB 9529 / HD100).